Reading from the N-terminus, the 419-residue chain is uncharacterized protein (419 aa).

This is an uncharacterized protein from Caenorhabditis elegans.